Here is a 305-residue protein sequence, read N- to C-terminus: MSNTNGSAITEFILLGLTDCPELQSLLFVLFLVVYLVTLLGNLGMIMLMRLDSRLHTPMYFFLTNLAFVDLCYTSNATPQMSTNIVSEKTISFAGCFTQCYIFIALLLTEFYMLAAMAYDRYVAIYDPLRYSVKTSRRVCICLATFPYVYGFSDGLFQAILTFRLTFCRSSVINHFYCADPPLIKLSCSDTYVKEHAMFISAGFNLSSSLTIVLVSYAFILAAILRIKSAEGRHKAFSTCGSHMMAVTLFYGTLFCMYIRPPTDKTVEESKIIAVFYTFVSPVLNPLIYSLRNKDVKQALKNVLR.

Over 1-25 the chain is Extracellular; that stretch reads MSNTNGSAITEFILLGLTDCPELQS. Asn5 is a glycosylation site (N-linked (GlcNAc...) asparagine). Residues 26–46 form a helical membrane-spanning segment; the sequence is LLFVLFLVVYLVTLLGNLGMI. Over 47–54 the chain is Cytoplasmic; sequence MLMRLDSR. The chain crosses the membrane as a helical span at residues 55–75; the sequence is LHTPMYFFLTNLAFVDLCYTS. Topologically, residues 76–98 are extracellular; it reads NATPQMSTNIVSEKTISFAGCFT. The cysteines at positions 96 and 188 are disulfide-linked. Residues 99 to 119 traverse the membrane as a helical segment; it reads QCYIFIALLLTEFYMLAAMAY. Residues 120 to 138 are Cytoplasmic-facing; the sequence is DRYVAIYDPLRYSVKTSRR. Residues 139–159 traverse the membrane as a helical segment; the sequence is VCICLATFPYVYGFSDGLFQA. Residues 160-195 lie on the Extracellular side of the membrane; that stretch reads ILTFRLTFCRSSVINHFYCADPPLIKLSCSDTYVKE. Residues 196–216 traverse the membrane as a helical segment; it reads HAMFISAGFNLSSSLTIVLVS. The Cytoplasmic segment spans residues 217-236; that stretch reads YAFILAAILRIKSAEGRHKA. A helical transmembrane segment spans residues 237–257; it reads FSTCGSHMMAVTLFYGTLFCM. At 258–270 the chain is on the extracellular side; the sequence is YIRPPTDKTVEES. The helical transmembrane segment at 271–291 threads the bilayer; it reads KIIAVFYTFVSPVLNPLIYSL. Residues 292 to 305 lie on the Cytoplasmic side of the membrane; the sequence is RNKDVKQALKNVLR.

The protein belongs to the G-protein coupled receptor 1 family.

The protein resides in the cell membrane. Odorant receptor. This chain is Olfactory receptor 5M11 (OR5M11), found in Homo sapiens (Human).